Reading from the N-terminus, the 461-residue chain is Proton extrusion protein PxcA (461 aa).

Helical transmembrane passes span 244-264 (FMLL…ALIV), 339-359 (LKNI…VFTG), 386-406 (IILF…EVLV), and 421-441 (FINM…KYWI).

The protein belongs to the CemA family.

It is found in the cell inner membrane. Its function is as follows. Required for H(+) efflux immediately after light irradiation to form a rapid H(+) concentration gradient across the thylakoid membranes. Together with PxcL, contributes to transient H(+) uptake following dark to light transition. The protein is Proton extrusion protein PxcA of Thermosynechococcus vestitus (strain NIES-2133 / IAM M-273 / BP-1).